The following is a 626-amino-acid chain: Phosphoenolpyruvate carboxykinase (ATP) 2 (626 aa).

Disordered stretches follow at residues 1-23 (MASP…APVN) and 64-86 (PNLV…KHQQ). An ATP-binding site is contributed by 324-331 (GLSGTGKT).

Belongs to the phosphoenolpyruvate carboxykinase (ATP) family. In terms of assembly, homohexamer.

It is found in the cytoplasm. The catalysed reaction is oxaloacetate + ATP = phosphoenolpyruvate + ADP + CO2. Its pathway is carbohydrate biosynthesis; gluconeogenesis. This Urochloa panicoides (Panic liverseed grass) protein is Phosphoenolpyruvate carboxykinase (ATP) 2 (PCK2).